The chain runs to 407 residues: MRRTPAAERLSELGFPPRRGSQEPPFPLGVTRGWGGWPIEKRCEGPRPVPFSERSAEDGREQPAHGSGILWRVRTRLSLCRDPEPPPPPPPLCLLRVSLLCALRAGGRGSRWSEDSARLLLLPPAGASGSLKAERSSSTPYAGRMLESSGCKALKEGVLEKRSDGLLQLWKKKCCILTEEGLLLIPPKQVQHQQQQQQQQQPGQGTAEPSQPSGPAVTSLEPPAKLKELHFSNMKTVDCVERKGKYMYFTVVMAEGKEIDFRCPQDQGWNAEITLQMVQYKNRQAILAVKSTRQKQQHLVQQQPPQTQQIQPQPQQPQIQPQPQPQIQPQPQPQPQPQPQPQQQPQPQQLHSYPHPHPHLYPHPHPHAHSHPHPHPHPHPHQLQHAHQPLHSQPQGHRLLRSTSNSA.

Basic and acidic residues-rich tracts occupy residues 1-11 (MRRTPAAERLS) and 54-63 (RSAEDGREQP). Residues 1 to 67 (MRRTPAAERL…DGREQPAHGS (67 aa)) are disordered. The 36-residue stretch at 149 to 184 (SGCKALKEGVLEKRSDGLLQLWKKKCCILTEEGLLL) folds into the PH domain. Disordered stretches follow at residues 188–224 (KQVQHQQQQQQQQQPGQGTAEPSQPSGPAVTSLEPPA) and 296–407 (QQHL…SNSA). 2 stretches are compositionally biased toward low complexity: residues 189–204 (QVQHQQQQQQQQQPGQ) and 297–319 (QHLVQQQPPQTQQIQPQPQQPQI). Residues 312–348 (PQPQQPQIQPQPQPQIQPQPQPQPQPQPQPQQQPQPQ) are 15 X 2 AA repeats of P-Q. A compositionally biased stretch (pro residues) spans 320–344 (QPQPQPQIQPQPQPQPQPQPQPQQQ). Positions 354 to 381 (PHPHPHLYPHPHPHAHSHPHPHPHPHPH) are 11 X 2 AA repeats of P-H. Residues 354–384 (PHPHPHLYPHPHPHAHSHPHPHPHPHPHQLQ) show a composition bias toward basic residues. Positions 385-395 (HAHQPLHSQPQ) are enriched in low complexity.

As to quaternary structure, interacts with RPL14, EIF3S7 and PABPC4.

It is found in the cytoplasm. The protein localises to the cytoplasmic vesicle. Its subcellular location is the nucleus. It localises to the nucleolus. Functionally, seems to be involved in regulation of apoptosis. May be involved in detachment-mediated programmed cell death. May mediate apoptosis during neuronal development. May be involved in regulation of anti-apoptotic effects of IGF1. May be involved in translational regulation. The protein is Pleckstrin homology-like domain family A member 1 (Phlda1) of Rattus norvegicus (Rat).